A 689-amino-acid polypeptide reads, in one-letter code: Glycine--tRNA ligase beta subunit (689 aa).

It belongs to the class-II aminoacyl-tRNA synthetase family. In terms of assembly, tetramer of two alpha and two beta subunits.

The protein localises to the cytoplasm. It carries out the reaction tRNA(Gly) + glycine + ATP = glycyl-tRNA(Gly) + AMP + diphosphate. This Shewanella baltica (strain OS195) protein is Glycine--tRNA ligase beta subunit.